A 334-amino-acid polypeptide reads, in one-letter code: rRNA 2'-O-methyltransferase fibrillarin (334 aa).

Positions 1–93 are enriched in gly residues; sequence MEGRGGSRGG…GGKPAAGGKP (93 aa). Residues 1 to 94 are disordered; that stretch reads MEGRGGSRGG…GKPAAGGKPG (94 aa). S-adenosyl-L-methionine is bound by residues 184-185, 203-204, 228-229, and 248-251; these read TT, EL, DA, and DVAQ.

It belongs to the methyltransferase superfamily. Fibrillarin family. Component of box C/D small nucleolar ribonucleoprotein (snoRNP) particles. It is associated with the U3, U8 and U13 small nuclear RNAs. Part of the small subunit (SSU) processome, composed of more than 70 proteins and the RNA chaperone small nucleolar RNA (snoRNA) U3. By homology to other fibrillarins, some or all of the N-terminal domain arginines are modified to asymmetric dimethylarginine (DMA).

It is found in the nucleus. The protein localises to the nucleolus. It carries out the reaction L-glutaminyl-[histone H2A] + S-adenosyl-L-methionine = N(5)-methyl-L-glutaminyl-[histone H2A] + S-adenosyl-L-homocysteine + H(+). Functionally, S-adenosyl-L-methionine-dependent methyltransferase that has the ability to methylate both RNAs and proteins. Involved in pre-rRNA processing. Utilizes the methyl donor S-adenosyl-L-methionine to catalyze the site-specific 2'-hydroxyl methylation of ribose moieties in pre-ribosomal RNA. Site specificity is provided by a guide RNA that base pairs with the substrate. Methylation occurs at a characteristic distance from the sequence involved in base pairing with the guide RNA. Also acts as a protein methyltransferase by mediating methylation of 'Gln-105' of histone H2A (H2AQ105me), a modification that impairs binding of the FACT complex and is specifically present at 35S ribosomal DNA locus. Part of the small subunit (SSU) processome, first precursor of the small eukaryotic ribosomal subunit. During the assembly of the SSU processome in the nucleolus, many ribosome biogenesis factors, an RNA chaperone and ribosomal proteins associate with the nascent pre-rRNA and work in concert to generate RNA folding, modifications, rearrangements and cleavage as well as targeted degradation of pre-ribosomal RNA by the RNA exosome. This chain is rRNA 2'-O-methyltransferase fibrillarin (fbl), found in Dictyostelium discoideum (Social amoeba).